A 517-amino-acid chain; its full sequence is C-22 sterol desaturase ERG5 (517 aa).

The chain crosses the membrane as a helical span at residues 21–41; that stretch reads LAVAKATGSPITTLFTIIFLI. C458 lines the heme pocket.

It belongs to the cytochrome P450 family. Requires heme as cofactor.

It localises to the endoplasmic reticulum membrane. The enzyme catalyses 5-dehydroepisterol + NADPH + O2 + H(+) = ergosta-5,7,22,24(28)-tetraen-3beta-ol + NADP(+) + 2 H2O. It participates in steroid metabolism; ergosterol biosynthesis; ergosterol from zymosterol: step 4/5. In terms of biological role, C-22 sterol desaturase; part of the third module of ergosterol biosynthesis pathway that includes the late steps of the pathway. ERG5 converts 5-dehydroepisterol into ergosta-5,7,22,24(28)-tetraen-3beta-ol by forming the C-22(23) double bond in the sterol side chain. The third module or late pathway involves the ergosterol synthesis itself through consecutive reactions that mainly occur in the endoplasmic reticulum (ER) membrane. Firstly, the squalene synthase ERG9 catalyzes the condensation of 2 farnesyl pyrophosphate moieties to form squalene, which is the precursor of all steroids. Squalene synthase is crucial for balancing the incorporation of farnesyl diphosphate (FPP) into sterol and nonsterol isoprene synthesis. Secondly, the squalene epoxidase ERG1 catalyzes the stereospecific oxidation of squalene to (S)-2,3-epoxysqualene, which is considered to be a rate-limiting enzyme in steroid biosynthesis. Then, the lanosterol synthase ERG7 catalyzes the cyclization of (S)-2,3 oxidosqualene to lanosterol, a reaction that forms the sterol core. In the next steps, lanosterol is transformed to zymosterol through a complex process involving various demethylation, reduction and desaturation reactions. The lanosterol 14-alpha-demethylase ERG11 (also known as CYP51) catalyzes C14-demethylation of lanosterol to produce 4,4'-dimethyl cholesta-8,14,24-triene-3-beta-ol, which is critical for ergosterol biosynthesis. The C-14 reductase ERG24 reduces the C14=C15 double bond of 4,4-dimethyl-cholesta-8,14,24-trienol to produce 4,4-dimethyl-cholesta-8,24-dienol. 4,4-dimethyl-cholesta-8,24-dienol is substrate of the C-4 demethylation complex ERG25-ERG26-ERG27 in which ERG25 catalyzes the three-step monooxygenation required for the demethylation of 4,4-dimethyl and 4alpha-methylsterols, ERG26 catalyzes the oxidative decarboxylation that results in a reduction of the 3-beta-hydroxy group at the C-3 carbon to an oxo group, and ERG27 is responsible for the reduction of the keto group on the C-3. ERG28 has a role as a scaffold to help anchor ERG25, ERG26 and ERG27 to the endoplasmic reticulum and ERG29 regulates the activity of the iron-containing C4-methylsterol oxidase ERG25. Then, the sterol 24-C-methyltransferase ERG6 catalyzes the methyl transfer from S-adenosyl-methionine to the C-24 of zymosterol to form fecosterol. The C-8 sterol isomerase ERG2 catalyzes the reaction which results in unsaturation at C-7 in the B ring of sterols and thus converts fecosterol to episterol. The sterol-C5-desaturase ERG3 then catalyzes the introduction of a C-5 double bond in the B ring to produce 5-dehydroepisterol. The C-22 sterol desaturase ERG5 further converts 5-dehydroepisterol into ergosta-5,7,22,24(28)-tetraen-3beta-ol by forming the C-22(23) double bond in the sterol side chain. Finally, ergosta-5,7,22,24(28)-tetraen-3beta-ol is substrate of the C-24(28) sterol reductase ERG4 to produce ergosterol. The chain is C-22 sterol desaturase ERG5 from Candida albicans (strain SC5314 / ATCC MYA-2876) (Yeast).